The primary structure comprises 553 residues: Flotillin family inner membrane protein YqiK (553 aa).

At 1–9 (MDDIVNSVP) the chain is on the periplasmic side. Residues 10–30 (SWMFTAIIAVCILFIIGIIFA) traverse the membrane as a helical segment. The Cytoplasmic segment spans residues 31-553 (RLYRRASAEQ…STTPVEEKAE (523 aa)).

This sequence belongs to the band 7/mec-2 family. Flotillin subfamily. Homooligomerizes.

The protein localises to the cell inner membrane. It localises to the membrane raft. Functionally, found in membrane microdomains that may be equivalent to eukaryotic membrane rafts. FMMs are highly dynamic and increase in number as cells age. Flotillins are thought to be important factors in membrane fluidity. The sequence is that of Flotillin family inner membrane protein YqiK (yqiK) from Escherichia coli (strain K12).